Here is a 312-residue protein sequence, read N- to C-terminus: Protein dif-1 (312 aa).

Solcar repeat units follow at residues 2 to 93 (SDVL…GKWL), 102 to 193 (MTFI…LKKK), and 203 to 289 (LSPG…TLAA). Transmembrane regions (helical) follow at residues 5–25 (LLNF…GHPF), 69–89 (MAAP…GCAV), 104–124 (FIQN…VMVP), 172–192 (TLLR…YLKK), 209–229 (LMAG…ADVL), and 261–282 (LFKG…CFFG).

This sequence belongs to the mitochondrial carrier (TC 2.A.29) family.

The protein localises to the mitochondrion inner membrane. Functionally, seems to play a role in the maintenance of tissue differentiation in the developing embryo, but not for its initiation. In Caenorhabditis elegans, this protein is Protein dif-1 (dif-1).